We begin with the raw amino-acid sequence, 172 residues long: L-amino acid oxidase (172 aa).

44–47 (GPMR) provides a ligand contact to FAD. Substrate contacts are provided by Arg-47 and His-103.

It belongs to the flavin monoamine oxidase family. FIG1 subfamily. Heterodimer; non-covalently linked. Requires FAD as cofactor. N-glycosylated. As to expression, expressed by the venom gland.

Its subcellular location is the secreted. It catalyses the reaction an L-alpha-amino acid + O2 + H2O = a 2-oxocarboxylate + H2O2 + NH4(+). The catalysed reaction is L-leucine + O2 + H2O = 4-methyl-2-oxopentanoate + H2O2 + NH4(+). The enzyme catalyses L-phenylalanine + O2 + H2O = 3-phenylpyruvate + H2O2 + NH4(+). It carries out the reaction L-tryptophan + O2 + H2O = indole-3-pyruvate + H2O2 + NH4(+). It catalyses the reaction L-methionine + O2 + H2O = 4-methylsulfanyl-2-oxobutanoate + H2O2 + NH4(+). The catalysed reaction is L-isoleucine + O2 + H2O = (S)-3-methyl-2-oxopentanoate + H2O2 + NH4(+). The enzyme catalyses L-arginine + O2 + H2O = 5-guanidino-2-oxopentanoate + H2O2 + NH4(+). It carries out the reaction L-tyrosine + O2 + H2O = 3-(4-hydroxyphenyl)pyruvate + H2O2 + NH4(+). Activity is increased by Mn(2+) ions. Inhibited by Zn(2+), Ni(2+), Co(2+), Cu(2+) and Al(3+). No significant activity change by Na(+), K(+), Ca(2+), Mg(2+) and Ba(2+) ions. Both isoform are completely inhibited by L-Cys and reduced glutathione. O-phenanthroline, beta-mercaptoethanol and PMSF completely inhibit the enzymatic activity of LAAOII, but have no activity on LAAOI. Iodoacetic acid inhibits the enzymatic activity of LAAOII by 46% but has no effect on the LAAOI activity. Catalyzes an oxidative deamination of predominantly hydrophobic and aromatic L-amino acids, thus producing hydrogen peroxide that may contribute to the diverse toxic effects of this enzyme. Shows high specificity for L-Arg, L-Met, L-Phe, L-Leu, L-Tyr, L-Ile and L-Trp, low specificity for L-Val, L-Ala, L-Asn, L-Gln, and no specificity for L-Pro, L-Ser, L-Thr, L-Cys, L-Gly and L-Asp. Exhibits diverse biological activities, such as hemorrhage, hemolysis, edema, antibacterial and antiparasitic activities, as well as regulation of platelet aggregation. Its effect on platelets is controversial, since it either induces aggregation or inhibits agonist-induced aggregation. These different effects are probably due to different experimental conditions. In Cerastes cerastes (Horned desert viper), this protein is L-amino acid oxidase.